We begin with the raw amino-acid sequence, 333 residues long: Glycerol-3-phosphate dehydrogenase [NAD(P)+] (333 aa).

3 residues coordinate NADPH: Trp-13, Lys-33, and Lys-108. Residues Lys-108 and Gly-138 each coordinate sn-glycerol 3-phosphate. An NADPH-binding site is contributed by Ser-142. The sn-glycerol 3-phosphate site is built by Lys-193, Asp-246, Ser-256, Arg-257, and Asn-258. Lys-193 functions as the Proton acceptor in the catalytic mechanism. Arg-257 provides a ligand contact to NADPH. NADPH contacts are provided by Val-281 and Glu-283.

The protein belongs to the NAD-dependent glycerol-3-phosphate dehydrogenase family.

Its subcellular location is the cytoplasm. It catalyses the reaction sn-glycerol 3-phosphate + NAD(+) = dihydroxyacetone phosphate + NADH + H(+). The enzyme catalyses sn-glycerol 3-phosphate + NADP(+) = dihydroxyacetone phosphate + NADPH + H(+). The protein operates within membrane lipid metabolism; glycerophospholipid metabolism. Its function is as follows. Catalyzes the reduction of the glycolytic intermediate dihydroxyacetone phosphate (DHAP) to sn-glycerol 3-phosphate (G3P), the key precursor for phospholipid synthesis. In Bifidobacterium longum (strain NCC 2705), this protein is Glycerol-3-phosphate dehydrogenase [NAD(P)+].